Reading from the N-terminus, the 110-residue chain is UPF0122 protein spr1167 (110 aa).

This sequence belongs to the UPF0122 family.

In terms of biological role, might take part in the signal recognition particle (SRP) pathway. This is inferred from the conservation of its genetic proximity to ftsY/ffh. May be a regulatory protein. The sequence is that of UPF0122 protein spr1167 from Streptococcus pneumoniae (strain ATCC BAA-255 / R6).